A 453-amino-acid chain; its full sequence is Plasmepsin II (453 aa).

At Met1–Lys37 the chain is on the cytoplasmic side. Positions Met1 to Gly124 are excised as a propeptide. The helical; Signal-anchor for type II membrane protein transmembrane segment at Gly38–Val58 threads the bilayer. Over Tyr59–Leu453 the chain is Lumenal. The Peptidase A1 domain maps to Phe140 to Ala447. The active site involves Asp158. Cysteines 171 and 176 form a disulfide. Asp338 is an active-site residue. Cys373 and Cys409 are disulfide-bonded.

Belongs to the peptidase A1 family. As to quaternary structure, component of the hemozoin formation complex (HFC) composed of falcipains FP2A and/or FP2B, plasmepsins PMII, PMIII/HAP and PMIV, heme detoxifying protein HDP and falcilysin FLN. The HFC complex is involved in hemoglobin degradation and detoxification of heme in the food vacuole during the asexual blood stage. Not N-glycosylated. In terms of processing, proteolytically cleaved into the soluble active mature form in the digestive vacuole by cysteine protease falcipains; the process begins at the early ring stage. Proteolysis requires an acidic environment. In absence of falcipains, autoprocessing may serve as an alternate activation system.

The protein resides in the membrane. It localises to the vacuole lumen. It is found in the vacuole membrane. It catalyses the reaction Hydrolysis of the bonds linking certain hydrophobic residues in hemoglobin or globin. Also cleaves small molecules substrates such as Ala-Leu-Glu-Arg-Thr-Phe-|-Phe(NO2)-Ser-Phe-Pro-Thr.. Its activity is regulated as follows. Inhibited by pepstatin A. During the asexual blood stage, participates in initial cleavage of native host hemoglobin (Hb) resulting in Hb denaturation. May cleave preferentially denatured hemoglobin that has been cleaved by PMI. Digestion of host Hb is an essential step which provides the parasite with amino acids for protein synthesis, and regulates osmolarity. This is Plasmepsin II from Plasmodium falciparum (isolate HB3).